Here is a 194-residue protein sequence, read N- to C-terminus: Ion-translocating oxidoreductase complex subunit B (194 aa).

The interval 1-26 (MSSILIAVIAIAALALVFGLILGFAS) is hydrophobic. The region spanning 32–90 (ESDPIVEQIDAILPQTQCGQCGYPGCKPYAEAIANGDMINKCPPGGQATIEKLADLMGV) is the 4Fe-4S domain. C49, C52, C57, C73, C114, C117, C120, C124, C144, C147, C150, and C154 together coordinate [4Fe-4S] cluster. 4Fe-4S ferredoxin-type domains are found at residues 105-134 (KVAF…GGTK) and 135-164 (ALHT…MIPV).

This sequence belongs to the 4Fe4S bacterial-type ferredoxin family. RnfB subfamily. The complex is composed of six subunits: RnfA, RnfB, RnfC, RnfD, RnfE and RnfG. Requires [4Fe-4S] cluster as cofactor.

It localises to the cell inner membrane. Part of a membrane-bound complex that couples electron transfer with translocation of ions across the membrane. In Aliivibrio fischeri (strain ATCC 700601 / ES114) (Vibrio fischeri), this protein is Ion-translocating oxidoreductase complex subunit B.